The following is an 82-amino-acid chain: Putative membrane protein insertion efficiency factor (82 aa).

The protein belongs to the UPF0161 family.

It localises to the cell inner membrane. Functionally, could be involved in insertion of integral membrane proteins into the membrane. The polypeptide is Putative membrane protein insertion efficiency factor (Colwellia psychrerythraea (strain 34H / ATCC BAA-681) (Vibrio psychroerythus)).